We begin with the raw amino-acid sequence, 188 residues long: F-box only protein 36 (188 aa).

The region spanning 91 to 137 (FDFLERLSDDLLLNIISYLDLEDIARLCQTSHRFAKLCMSDKLWEQI) is the F-box domain.

As to quaternary structure, directly interacts with SKP1 and CUL1.

In terms of biological role, substrate-recognition component of the SCF (SKP1-CUL1-F-box protein)-type E3 ubiquitin ligase complex. The polypeptide is F-box only protein 36 (FBXO36) (Pongo abelii (Sumatran orangutan)).